Reading from the N-terminus, the 85-residue chain is uncharacterized protein (85 aa).

This is an uncharacterized protein from Sinorhizobium fredii (strain NBRC 101917 / NGR234).